The primary structure comprises 1363 residues: Vascular endothelial growth factor receptor 3 (1363 aa).

An N-terminal signal peptide occupies residues 1-24 (MQPGAALNLRLWLCLGLLQGLANG). At 25-775 (YSMTPPTLNI…EGSEDKGSME (751 aa)) the chain is on the extracellular side. Asn-33, Asn-104, Asn-166, Asn-251, Asn-299, and Asn-411 each carry an N-linked (GlcNAc...) asparagine glycan. 7 Ig-like C2-type domains span residues 44-118 (GDSL…YIKA), 151-213 (KDSM…WGDQ), 230-326 (YDIQ…TEVI), 331-415 (PFIS…ISLE), 422-552 (PHIH…FYVT), 555-671 (PDGF…KYLS), and 678-764 (PRLT…ASVA). 2 cysteine pairs are disulfide-bonded: Cys-51-Cys-111 and Cys-158-Cys-206. Cys-252 and Cys-310 form a disulfide bridge. Disulfide bonds link Cys-445-Cys-534, Cys-466-Cys-486, and Cys-578-Cys-653. N-linked (GlcNAc...) asparagine glycosylation is found at Asn-515, Asn-527, Asn-582, Asn-594, Asn-683, and Asn-690. The cysteines at positions 699 and 751 are disulfide-linked. Asn-758 is a glycosylation site (N-linked (GlcNAc...) asparagine). Residues 776 to 796 (IVILIGTGVIAVFFWVLLLLI) traverse the membrane as a helical segment. Over 797 to 1363 (FCNMKRPAHA…GSTFFADSSY (567 aa)) the chain is Cytoplasmic. Phosphotyrosine; by SRC occurs at positions 830 and 833. In terms of domain architecture, Protein kinase spans 845–1173 (LHLGRVLGHG…DLVEILGDLL (329 aa)). ATP-binding positions include 851 to 859 (LGHGAFGKV) and Lys-879. Residue Asp-1037 is the Proton acceptor of the active site. Tyr-1063 is subject to Phosphotyrosine; by autocatalysis and SRC. A phosphotyrosine; by autocatalysis mark is found at Tyr-1068, Tyr-1230, Tyr-1231, and Tyr-1265. The disordered stretch occupies residues 1288-1330 (ESRHRPEGSFSCKGPGQHMDIPRGHPDPQGRRRRPTQGAQGGK). The span at 1307 to 1317 (DIPRGHPDPQG) shows a compositional bias: basic and acidic residues. 2 positions are modified to phosphotyrosine; by autocatalysis and SRC: Tyr-1333 and Tyr-1337. A Phosphotyrosine; by autocatalysis modification is found at Tyr-1363.

Belongs to the protein kinase superfamily. Tyr protein kinase family. CSF-1/PDGF receptor subfamily. In terms of assembly, interacts with VEGFC and VEGFD. Monomer in the absence of bound VEGFC or VEGFD. Homodimer in the presence of bound VEGFC or VEGFD. Can also form a heterodimer with KDR. Interacts with PTPN14; the interaction is enhanced by stimulation with VEGFC. Interacts with CRK, GRB2, PTK2/FAK1, SHC1, PIK3R1 and PTPN11/SHP-2. Identified in a complex with SRC and ITGB1. Post-translationally, autophosphorylated on tyrosine residues upon ligand binding. Autophosphorylation occurs in trans, i.e. one subunit of the dimeric receptor phosphorylates tyrosine residues on the other subunit. Phosphorylation in response to H(2)O(2) is mediated by a process that requires SRC and PRKCD activity. Phosphorylation at Tyr-1068 is required for autophosphorylation at additional tyrosine residues. Phosphorylation at Tyr-1063 and Tyr-1337 is important for interaction with CRK and subsequent activation of MAPK8. Phosphorylation at Tyr-1230, Tyr-1231 and Tyr-1337 is important for interaction with GRB2 and subsequent activation of the AKT1 and MAPK1/ERK2 and/or MAPK3/ERK1 signaling pathways. In response to endothelial cell adhesion onto collagen, can also be phosphorylated in the absence of FLT4 kinase activity by SRC. Expressed in adult lung and liver, and in fetal liver, brain, intestine and placenta.

It localises to the cell membrane. The protein localises to the cytoplasm. It is found in the nucleus. The catalysed reaction is L-tyrosyl-[protein] + ATP = O-phospho-L-tyrosyl-[protein] + ADP + H(+). With respect to regulation, present in an inactive conformation in the absence of bound ligand. Binding of VEGFC or VEGFD leads to dimerization and activation by autophosphorylation on tyrosine residues. Functionally, tyrosine-protein kinase that acts as a cell-surface receptor for VEGFC and VEGFD, and plays an essential role in adult lymphangiogenesis and in the development of the vascular network and the cardiovascular system during embryonic development. Promotes proliferation, survival and migration of endothelial cells, and regulates angiogenic sprouting. Signaling by activated FLT4 leads to enhanced production of VEGFC, and to a lesser degree VEGFA, thereby creating a positive feedback loop that enhances FLT4 signaling. Modulates KDR signaling by forming heterodimers. Mediates activation of the MAPK1/ERK2, MAPK3/ERK1 signaling pathway, of MAPK8 and the JUN signaling pathway, and of the AKT1 signaling pathway. Phosphorylates SHC1. Mediates phosphorylation of PIK3R1, the regulatory subunit of phosphatidylinositol 3-kinase. Promotes phosphorylation of MAPK8 at 'Thr-183' and 'Tyr-185', and of AKT1 at 'Ser-473'. The chain is Vascular endothelial growth factor receptor 3 (Flt4) from Mus musculus (Mouse).